The primary structure comprises 163 residues: Deoxyuridine 5'-triphosphate nucleotidohydrolase (163 aa).

Residues 78–80 (RSG), N91, and 95–97 (TVD) contribute to the substrate site. The segment covering 140–151 (ERESLNETERGD) has biased composition (basic and acidic residues). Residues 140–163 (ERESLNETERGDGGFGHTGVNSQP) form a disordered region.

It belongs to the dUTPase family. The cofactor is Mg(2+).

The enzyme catalyses dUTP + H2O = dUMP + diphosphate + H(+). It functions in the pathway pyrimidine metabolism; dUMP biosynthesis; dUMP from dCTP (dUTP route): step 2/2. Its function is as follows. This enzyme is involved in nucleotide metabolism: it produces dUMP, the immediate precursor of thymidine nucleotides and it decreases the intracellular concentration of dUTP so that uracil cannot be incorporated into DNA. This chain is Deoxyuridine 5'-triphosphate nucleotidohydrolase, found in Heliobacterium modesticaldum (strain ATCC 51547 / Ice1).